The chain runs to 516 residues: GMP synthase [glutamine-hydrolyzing] (516 aa).

The Glutamine amidotransferase type-1 domain occupies 8–198 (KILILDFGSQ…VVNICGCDTL (191 aa)). C84 acts as the Nucleophile in catalysis. Catalysis depends on residues H172 and E174. Positions 199-391 (WNIENIIEND…LGLPYNMLYR (193 aa)) constitute a GMPS ATP-PPase domain. Residue 226 to 232 (SGGVDSS) coordinates ATP.

Homodimer.

It catalyses the reaction XMP + L-glutamine + ATP + H2O = GMP + L-glutamate + AMP + diphosphate + 2 H(+). Its pathway is purine metabolism; GMP biosynthesis; GMP from XMP (L-Gln route): step 1/1. In terms of biological role, catalyzes the synthesis of GMP from XMP. This Francisella tularensis subsp. holarctica (strain FTNF002-00 / FTA) protein is GMP synthase [glutamine-hydrolyzing].